The following is a 1616-amino-acid chain: Myosin-IIIa (1616 aa).

A Protein kinase domain is found at 21–287 (WEITETIGKG…VSELLQHKFI (267 aa)). ATP contacts are provided by residues 27-35 (IGKGTYGKV) and K50. D150 functions as the Proton acceptor in the catalytic mechanism. The Myosin motor domain maps to 338–1053 (KDVDDLATLE…HVEQLNLMRK (716 aa)). Positions 934-956 (LMDLLSKMVVGQPHFVRCIKPNS) are actin-binding. 3 consecutive IQ domains span residues 1055-1084 (AIDK…KRKE), 1082-1111 (RKES…MKNT), and 1346-1375 (EDKA…SSFK). Residues 1401-1479 (EEINNIKKKD…RRVSSQQCLS (79 aa)) form an interaction with MORN4 region. Disordered regions lie at residues 1545–1567 (LPSR…QQEL) and 1581–1616 (AESP…VQQS). Composition is skewed to basic and acidic residues over residues 1550–1564 (GPKE…RRPQ) and 1583–1592 (SPEKEEEREP). Residues 1602 to 1616 (LLRKTSQRRRLVQQS) are compositionally biased toward basic residues.

It in the C-terminal section; belongs to the TRAFAC class myosin-kinesin ATPase superfamily. Myosin family. In the N-terminal section; belongs to the protein kinase superfamily. STE Ser/Thr protein kinase family. Interacts with MORN4. Interacts (via C-terminus) with ESPN and ESPNL. As to expression, strongest expression in retina, retinal pigment epithelial cells, cochlea and pancreas.

The protein localises to the cytoplasm. It localises to the cytoskeleton. Its subcellular location is the cell projection. It is found in the filopodium tip. The protein resides in the stereocilium. It catalyses the reaction L-seryl-[protein] + ATP = O-phospho-L-seryl-[protein] + ADP + H(+). The enzyme catalyses L-threonyl-[protein] + ATP = O-phospho-L-threonyl-[protein] + ADP + H(+). The catalysed reaction is ATP + H2O = ADP + phosphate + H(+). Actin-dependent motor protein with a protein kinase activity, playing an essential role in hearing. Probably also plays a role in vision. Required for normal cochlear hair bundle development and hearing. Plays an important role in the early steps of cochlear hair bundle morphogenesis. Influences the number and lengths of stereocilia to be produced and limits the growth of microvilli within the forming auditory hair bundles thereby contributing to the architecture of the hair bundle, including its staircase pattern. Involved in the elongation of actin in stereocilia tips by transporting the actin regulatory factor ESPN to the plus ends of actin filaments. This is Myosin-IIIa (MYO3A) from Homo sapiens (Human).